A 216-amino-acid chain; its full sequence is Uridine kinase (216 aa).

Residue Gly16–Ser23 coordinates ATP.

Belongs to the uridine kinase family.

The protein localises to the cytoplasm. It catalyses the reaction uridine + ATP = UMP + ADP + H(+). It carries out the reaction cytidine + ATP = CMP + ADP + H(+). It participates in pyrimidine metabolism; CTP biosynthesis via salvage pathway; CTP from cytidine: step 1/3. It functions in the pathway pyrimidine metabolism; UMP biosynthesis via salvage pathway; UMP from uridine: step 1/1. This chain is Uridine kinase, found in Pasteurella multocida (strain Pm70).